Consider the following 351-residue polypeptide: Cell shape-determining protein MreB (351 aa).

ATP is bound by residues 20-22 (TAN), 169-171 (GGT), 217-220 (ERIK), and 299-302 (GGAL).

Belongs to the FtsA/MreB family. As to quaternary structure, forms polymers.

The protein resides in the cytoplasm. Its function is as follows. Forms membrane-associated dynamic filaments that are essential for cell shape determination. Acts by regulating cell wall synthesis and cell elongation, and thus cell shape. A feedback loop between cell geometry and MreB localization may maintain elongated cell shape by targeting cell wall growth to regions of negative cell wall curvature. The polypeptide is Cell shape-determining protein MreB (Haemophilus influenzae (strain ATCC 51907 / DSM 11121 / KW20 / Rd)).